Here is a 408-residue protein sequence, read N- to C-terminus: Na(+)/H(+) antiporter NhaA 2 (408 aa).

The next 11 helical transmembrane spans lie at Gly36–Val56, Ile79–Ile99, Ala115–Phe135, Gly145–Gly165, Ile174–Phe194, Ser197–Phe217, Leu225–His245, Phe281–Leu301, Leu310–Leu330, Val348–Leu368, and Phe381–Tyr401.

The protein belongs to the NhaA Na(+)/H(+) (TC 2.A.33) antiporter family.

It localises to the cell inner membrane. It carries out the reaction Na(+)(in) + 2 H(+)(out) = Na(+)(out) + 2 H(+)(in). In terms of biological role, na(+)/H(+) antiporter that extrudes sodium in exchange for external protons. This is Na(+)/H(+) antiporter NhaA 2 from Flavobacterium johnsoniae (strain ATCC 17061 / DSM 2064 / JCM 8514 / BCRC 14874 / CCUG 350202 / NBRC 14942 / NCIMB 11054 / UW101) (Cytophaga johnsonae).